The primary structure comprises 33 residues: Photosystem II reaction center protein Psb30 (33 aa).

A helical membrane pass occupies residues 5–25 (VIAQLTMLTIAVITGPLVIFF).

Belongs to the Psb30/Ycf12 family. In terms of assembly, PSII is composed of 1 copy each of membrane proteins PsbA, PsbB, PsbC, PsbD, PsbE, PsbF, PsbH, PsbI, PsbJ, PsbK, PsbL, PsbM, PsbT, PsbX, PsbY, PsbZ, Psb30/Ycf12, peripheral proteins of the oxygen-evolving complex and a large number of cofactors. It forms dimeric complexes.

The protein localises to the plastid. Its subcellular location is the chloroplast thylakoid membrane. Functionally, a core subunit of photosystem II (PSII), probably helps stabilize the reaction center. The polypeptide is Photosystem II reaction center protein Psb30 (Welwitschia mirabilis (Tree tumbo)).